The chain runs to 942 residues: Valine--tRNA ligase (942 aa).

The short motif at 43-53 (PNVTGTLHMGH) is the 'HIGH' region element. The 'KMSKS' region motif lies at 551 to 555 (KMSKS). Lys-554 serves as a coordination point for ATP. Residues 876 to 942 (EGLVDLDAER…AGLREQRAKL (67 aa)) are a coiled coil.

It belongs to the class-I aminoacyl-tRNA synthetase family. ValS type 1 subfamily. In terms of assembly, monomer.

It localises to the cytoplasm. The catalysed reaction is tRNA(Val) + L-valine + ATP = L-valyl-tRNA(Val) + AMP + diphosphate. Catalyzes the attachment of valine to tRNA(Val). As ValRS can inadvertently accommodate and process structurally similar amino acids such as threonine, to avoid such errors, it has a 'posttransfer' editing activity that hydrolyzes mischarged Thr-tRNA(Val) in a tRNA-dependent manner. In Stenotrophomonas maltophilia (strain K279a), this protein is Valine--tRNA ligase.